The sequence spans 163 residues: Gas vesicle protein H2 (163 aa).

The segment at 57-92 (LGSDARSPSTPAGNADDAGDAETAHIETRASDDSDD) is disordered. Basic and acidic residues predominate over residues 78–88 (ETAHIETRASD).

Belongs to the gas vesicle GvpH family. GvpF to GvpM interact with each other in vitro, and may form multi-subunit complex(es). Interacts with GvpC. Might interact with GvpA.

It is found in the gas vesicle. The protein localises to the cytoplasm. In terms of biological role, a minor component of the gas vesicle, also found in soluble extracts. Proteins GvpF to GvpM might be involved in nucleating gas vesicle formation. Gas vesicles are hollow, gas filled proteinaceous nanostructures found in several microbial planktonic microorganisms. They allow positioning of halobacteria at the optimal depth for growth in the poorly aerated, shallow brine pools of their habitat. Expression of 2 c-vac DNA fragments containing 2 divergently transcribed regions (gvpE-gvpF-gvpG-gvpH-gvpI-gvpJ-gvpK-gvpL-gvpM and gvpA-gvpC-gvpN-gvpO) allows H.volcanii to produce gas vesicles. The chain is Gas vesicle protein H2 from Halobacterium salinarum (strain ATCC 700922 / JCM 11081 / NRC-1) (Halobacterium halobium).